The sequence spans 122 residues: Small ribosomal subunit protein bS6 (122 aa).

It belongs to the bacterial ribosomal protein bS6 family.

In terms of biological role, binds together with bS18 to 16S ribosomal RNA. This Methylibium petroleiphilum (strain ATCC BAA-1232 / LMG 22953 / PM1) protein is Small ribosomal subunit protein bS6.